Here is a 96-residue protein sequence, read N- to C-terminus: uncharacterized protein (96 aa).

3 consecutive transmembrane segments (helical) span residues 14–34, 38–58, and 67–87; these read FIEG…KYWA, LAVT…LLVL, and WPLK…GNFL.

The protein localises to the cell membrane. This is an uncharacterized protein from Bacillus subtilis (strain 168).